The following is a 564-amino-acid chain: Eukaryotic translation initiation factor 3 subunit L (564 aa).

Positions 331–537 constitute a PCI domain; the sequence is DAIRVFANIL…IHIADTKVAR (207 aa).

This sequence belongs to the eIF-3 subunit L family. Component of the eukaryotic translation initiation factor 3 (eIF-3) complex, which is composed of 13 subunits: EIF3A, EIF3B, EIF3C, EIF3D, EIF3E, EIF3F, EIF3G, EIF3H, EIF3I, EIF3J, EIF3K, EIF3L and EIF3M.

It is found in the cytoplasm. In terms of biological role, component of the eukaryotic translation initiation factor 3 (eIF-3) complex, which is involved in protein synthesis of a specialized repertoire of mRNAs and, together with other initiation factors, stimulates binding of mRNA and methionyl-tRNAi to the 40S ribosome. The eIF-3 complex specifically targets and initiates translation of a subset of mRNAs involved in cell proliferation. This Gallus gallus (Chicken) protein is Eukaryotic translation initiation factor 3 subunit L.